The sequence spans 344 residues: tRNA N6-adenosine threonylcarbamoyltransferase (344 aa).

Fe cation-binding residues include H118 and H122. Substrate contacts are provided by residues T141–G145, D174, G187, and N284. Residue D312 coordinates Fe cation.

The protein belongs to the KAE1 / TsaD family. Fe(2+) serves as cofactor.

Its subcellular location is the cytoplasm. It catalyses the reaction L-threonylcarbamoyladenylate + adenosine(37) in tRNA = N(6)-L-threonylcarbamoyladenosine(37) in tRNA + AMP + H(+). Its function is as follows. Required for the formation of a threonylcarbamoyl group on adenosine at position 37 (t(6)A37) in tRNAs that read codons beginning with adenine. Is involved in the transfer of the threonylcarbamoyl moiety of threonylcarbamoyl-AMP (TC-AMP) to the N6 group of A37, together with TsaE and TsaB. TsaD likely plays a direct catalytic role in this reaction. This chain is tRNA N6-adenosine threonylcarbamoyltransferase, found in Desulfotalea psychrophila (strain LSv54 / DSM 12343).